The sequence spans 129 residues: Sigma factor-binding protein Crl (129 aa).

Residues 99 to 119 (TQNCFHLKLVKTLEENFQLSV) are essential for activity.

This sequence belongs to the Crl family.

The protein resides in the cytoplasm. Its function is as follows. Binds to the sigma-S subunit of RNA polymerase, activating expression of sigma-S-regulated genes. Stimulates RNA polymerase holoenzyme formation and may bind to several other sigma factors, such as sigma-70 and sigma-32. This is Sigma factor-binding protein Crl from Vibrio vulnificus (strain CMCP6).